Reading from the N-terminus, the 288-residue chain is MSKNQGGNKHQGGSKTHLGHRARKRFGQNFLNDDYIIEQIVDAINPLPGENLIEIGPGLAALTEPTVDRSGHLKVIEIDRDLVERLQHHPFLSSKLEVIQADALSIDFSQFAEEGPARVFGNLPYNISTPLIFHLLKFADDVKDMHFMLQKEVVDRLAAEPGSKSYGRISVGVQQACKVTPVVAVPPSAFTPPPKVESSVVRLEPYAESPHPVKDKAQLHSLCLTAFNQRRKTIRNNLKQLVPAEQMEALGIDPGARPETLSVDDYCRISDWLTEHSLTKQAEKNDSQ.

The segment covering 1-14 has biased composition (polar residues); sequence MSKNQGGNKHQGGS. A disordered region spans residues 1 to 21; that stretch reads MSKNQGGNKHQGGSKTHLGHR. S-adenosyl-L-methionine is bound by residues Asn-29, Leu-31, Gly-56, Glu-77, Asp-102, and Asn-122.

It belongs to the class I-like SAM-binding methyltransferase superfamily. rRNA adenine N(6)-methyltransferase family. RsmA subfamily.

The protein localises to the cytoplasm. It carries out the reaction adenosine(1518)/adenosine(1519) in 16S rRNA + 4 S-adenosyl-L-methionine = N(6)-dimethyladenosine(1518)/N(6)-dimethyladenosine(1519) in 16S rRNA + 4 S-adenosyl-L-homocysteine + 4 H(+). Specifically dimethylates two adjacent adenosines (A1518 and A1519) in the loop of a conserved hairpin near the 3'-end of 16S rRNA in the 30S particle. May play a critical role in biogenesis of 30S subunits. In Idiomarina loihiensis (strain ATCC BAA-735 / DSM 15497 / L2-TR), this protein is Ribosomal RNA small subunit methyltransferase A.